A 273-amino-acid chain; its full sequence is Putative phosphoenolpyruvate synthase regulatory protein (273 aa).

153–160 contacts ADP; sequence GVSRSGKT.

It belongs to the pyruvate, phosphate/water dikinase regulatory protein family. PSRP subfamily.

It catalyses the reaction [pyruvate, water dikinase] + ADP = [pyruvate, water dikinase]-phosphate + AMP + H(+). It carries out the reaction [pyruvate, water dikinase]-phosphate + phosphate + H(+) = [pyruvate, water dikinase] + diphosphate. Its function is as follows. Bifunctional serine/threonine kinase and phosphorylase involved in the regulation of the phosphoenolpyruvate synthase (PEPS) by catalyzing its phosphorylation/dephosphorylation. This Albidiferax ferrireducens (strain ATCC BAA-621 / DSM 15236 / T118) (Rhodoferax ferrireducens) protein is Putative phosphoenolpyruvate synthase regulatory protein.